A 1239-amino-acid polypeptide reads, in one-letter code: Codanin-1 (1239 aa).

Position 2 is an N-acetylalanine (A2). Residues 61-72 (SRVLPQGPSTPA) show a composition bias toward polar residues. 2 disordered regions span residues 61–249 (SRVL…PPGC) and 261–299 (KARTKQLQQSPTPASPIPESGSPVPSRTGNLTAEPADPA). T70 carries the post-translational modification Phosphothreonine. Composition is skewed to low complexity over residues 77 to 88 (ASAALPARQGAP), 95 to 116 (ARSQLFPAAEPLSAAAEAPLAR), and 138 to 179 (GAAE…LSNL). Residues 193–213 (AGRTKPSRRINPTPVSEERSL) are interaction with ASF1A/B. The segment covering 219–238 (CFTSPPISCVPSSQPSTLDT) has biased composition (polar residues). Position 270 is a phosphoserine (S270). Helical transmembrane passes span 317–337 (CIAENLVPNLFLELFFVLQLL) and 631–651 (FAVVLLSLRLLAKFLGFVAFL).

As to quaternary structure, interacts with ASF1A and ASF1B. Found in a cytosolic complex with ASF1A, ASF1B, IPO4 and histones H3.1 and H4. As to expression, widely expressed in adult mice, the highest levels can be measured in erythropoietic cells.

The protein localises to the cytoplasm. Its subcellular location is the nucleus. The protein resides in the membrane. May act as a negative regulator of ASF1 in chromatin assembly. This is Codanin-1 (Cdan1) from Mus musculus (Mouse).